A 200-amino-acid chain; its full sequence is Phospholipase A2 inhibitor gamma subunit B (200 aa).

Residues 1–19 form the signal peptide; the sequence is MKFLLFCCLFGTFLATGMC. 8 cysteine pairs are disulfide-bonded: cysteine 22–cysteine 46, cysteine 25–cysteine 32, cysteine 39–cysteine 67, cysteine 73–cysteine 94, cysteine 95–cysteine 100, cysteine 120–cysteine 145, cysteine 138–cysteine 165, and cysteine 171–cysteine 191.

The protein belongs to the CNF-like-inhibitor family. In terms of assembly, heteromer composed of subunit A and subunit B.

It localises to the secreted. Functionally, inhibits the enzymatic activity of the phospholipase A2 (PLA2). The polypeptide is Phospholipase A2 inhibitor gamma subunit B (Elaphe climacophora (Japanese rat snake)).